Consider the following 744-residue polypeptide: C-type polyheme cytochrome OmcB (744 aa).

An N-terminal signal peptide occupies residues 1–23; sequence MSRKVTKYSAVLAVSLFAAALAG. The N-palmitoyl cysteine moiety is linked to residue cysteine 24. Cysteine 24 carries the S-diacylglycerol cysteine lipid modification. Residues cysteine 48, cysteine 51, histidine 52, cysteine 81, cysteine 84, histidine 85, cysteine 107, cysteine 110, histidine 111, cysteine 141, cysteine 144, histidine 145, cysteine 185, cysteine 188, histidine 189, cysteine 225, cysteine 228, histidine 229, cysteine 303, cysteine 306, histidine 307, cysteine 382, cysteine 385, histidine 386, cysteine 430, cysteine 433, histidine 434, cysteine 480, cysteine 483, histidine 484, cysteine 555, cysteine 558, histidine 559, cysteine 587, cysteine 590, and histidine 591 each coordinate heme c.

In terms of processing, binds 12 heme c groups per subunit.

It is found in the cell outer membrane. Involved in anaerobic respiration with Fe(3+) as terminal electron acceptor. Acts as an electron-transport mediator in the dissimilatory reduction of Fe(3+). The protein is C-type polyheme cytochrome OmcB (omcB) of Geobacter sulfurreducens (strain DL-1 / KN400).